The chain runs to 206 residues: dCTP deaminase, dUMP-forming (206 aa).

Residues R117–R122, D135, T143–E145, Q163, Y177, K184, and Q188 contribute to the dCTP site. Catalysis depends on E145, which acts as the Proton donor/acceptor.

This sequence belongs to the dCTP deaminase family. Homotrimer.

It carries out the reaction dCTP + 2 H2O = dUMP + NH4(+) + diphosphate. It participates in pyrimidine metabolism; dUMP biosynthesis; dUMP from dCTP: step 1/1. Its function is as follows. Bifunctional enzyme that catalyzes both the deamination of dCTP to dUTP and the hydrolysis of dUTP to dUMP without releasing the toxic dUTP intermediate. This Methanococcus maripaludis (strain C7 / ATCC BAA-1331) protein is dCTP deaminase, dUMP-forming.